A 510-amino-acid polypeptide reads, in one-letter code: MTNDPGSGFAAVWNAVVAELNGEPNTDGDAGTGTTLTSPLTPQQRAWLNLVQPLTIVEGFALLSVPSSFVQNEIERHLRTPITAALSRRLGQQIQLGVRIAPPPADDDDDSVAAAVEDPGLEASPETSQEVSDEIDDFGENAPKSRQSWPTHFKKRSTDADTSASADGTSLNRRYTFDTFVIGASNRFAHAATLAIAEAPARAYNPLFIWGESGLGKTHLLHAAGNYAQRLFPGMRVKYVSTEEFTNDFINSLRDDRKVAFKRSYRDVDVLLVDDIQFIEGKEGIQEEFFHTFNTLHNANKQIVISSDRPPKQLATLEDRLRTRFEWGLITDVQPPELETRIAILRKKAQMERLAVPDDVLELIASSIERNIRELEGALIRVTAFASLNKTPIDKALAEIVLRDLIADADTMQISAATIMAATVEYFDTTVEELRGPGKTRALAQSRQIAMYLCRELTDLSLPKIGQAFGRDHTTVMYAQRKILSEMAERREVFDHVKELTTRIRQRSKR.

The domain I, interacts with DnaA modulators stretch occupies residues 1–107 (MTNDPGSGFA…VRIAPPPADD (107 aa)). The tract at residues 107–169 (DDDDSVAAAV…ADTSASADGT (63 aa)) is domain II. The disordered stretch occupies residues 119–168 (PGLEASPETSQEVSDEIDDFGENAPKSRQSWPTHFKKRSTDADTSASADG). The tract at residues 170–386 (SLNRRYTFDT…GALIRVTAFA (217 aa)) is domain III, AAA+ region. ATP-binding residues include Gly-214, Gly-216, Lys-217, and Thr-218. The tract at residues 387–510 (SLNKTPIDKA…TTRIRQRSKR (124 aa)) is domain IV, binds dsDNA.

This sequence belongs to the DnaA family. As to quaternary structure, oligomerizes as a right-handed, spiral filament on DNA at oriC.

The protein localises to the cytoplasm. Plays an essential role in the initiation and regulation of chromosomal replication. ATP-DnaA binds to the origin of replication (oriC) to initiate formation of the DNA replication initiation complex once per cell cycle. Binds the DnaA box (a 9 base pair repeat at the origin) and separates the double-stranded (ds)DNA. Forms a right-handed helical filament on oriC DNA; dsDNA binds to the exterior of the filament while single-stranded (ss)DNA is stabiized in the filament's interior. The ATP-DnaA-oriC complex binds and stabilizes one strand of the AT-rich DNA unwinding element (DUE), permitting loading of DNA polymerase. After initiation quickly degrades to an ADP-DnaA complex that is not apt for DNA replication. Binds acidic phospholipids. The sequence is that of Chromosomal replication initiator protein DnaA from Mycobacterium ulcerans (strain Agy99).